A 240-amino-acid polypeptide reads, in one-letter code: Tetrahydromethanopterin S-methyltransferase subunit A (240 aa).

Residues 1–216 (MADKKAPASG…DAALIAKFNS (216 aa)) lie on the Cytoplasmic side of the membrane. Histidine 85 is a 5-hydroxybenzimidazolylcob(I)amide binding site. The chain crosses the membrane as a helical span at residues 217-234 (GYYNGKIQGIAIGLFLSL). Topologically, residues 235–240 (LIFSLL) are extracellular.

Belongs to the MtrA family. In terms of assembly, the complex is composed of 8 subunits; MtrA, MtrB, MtrC, MtrD, MtrE, MtrF, MtrG and MtrH. The cofactor is 5-hydroxybenzimidazolylcob(I)amide.

The protein localises to the cell membrane. The catalysed reaction is 5-methyl-5,6,7,8-tetrahydromethanopterin + coenzyme M + 2 Na(+)(in) = 5,6,7,8-tetrahydromethanopterin + methyl-coenzyme M + 2 Na(+)(out). Its pathway is one-carbon metabolism; methanogenesis from CO(2); methyl-coenzyme M from 5,10-methylene-5,6,7,8-tetrahydromethanopterin: step 2/2. Its function is as follows. Part of a complex that catalyzes the formation of methyl-coenzyme M and tetrahydromethanopterin from coenzyme M and methyl-tetrahydromethanopterin. This is an energy-conserving, sodium-ion translocating step. This is Tetrahydromethanopterin S-methyltransferase subunit A from Methanococcus aeolicus (strain ATCC BAA-1280 / DSM 17508 / OCM 812 / Nankai-3).